The chain runs to 560 residues: Cytosolic purine 5'-nucleotidase (560 aa).

Asp-52 (nucleophile) is an active-site residue. IMP is bound by residues Asp-52 and Asp-54. Mg(2+) is bound by residues Asp-52 and Asp-54. The Proton donor role is filled by Asp-54. 2 residues coordinate ATP: Arg-144 and Asn-154. Residues Arg-202, Asp-206, Lys-215, Thr-249, Asn-250, Ser-251, and Lys-292 each coordinate IMP. Asp-351 lines the Mg(2+) pocket. Ser-418 carries the phosphoserine modification. Positions 453 and 456 each coordinate ATP. Phosphoserine is present on residues Ser-502, Ser-511, and Ser-527. The segment at 541 to 560 (PQEITHCHDEDDDEEEEEEE) is disordered. Residues 548–560 (HDEDDDEEEEEEE) form a required for tetramer assembly region. Over residues 550-560 (EDDDEEEEEEE) the composition is skewed to acidic residues.

Belongs to the 5'(3')-deoxyribonucleotidase family. In terms of assembly, homotetramer. Mg(2+) is required as a cofactor.

The protein resides in the cytoplasm. The protein localises to the cytosol. The enzyme catalyses a ribonucleoside 5'-phosphate + H2O = a ribonucleoside + phosphate. It carries out the reaction a 2'-deoxyribonucleoside + a ribonucleoside 5'-phosphate = a ribonucleoside + a 2'-deoxyribonucleoside 5'-phosphate. The catalysed reaction is IMP + H2O = inosine + phosphate. It catalyses the reaction GMP + H2O = guanosine + phosphate. The enzyme catalyses dIMP + H2O = 2'-deoxyinosine + phosphate. It carries out the reaction dGMP + H2O = 2'-deoxyguanosine + phosphate. The catalysed reaction is XMP + H2O = xanthosine + phosphate. It catalyses the reaction inosine + GMP = guanosine + IMP. The enzyme catalyses dGMP + inosine = 2'-deoxyguanosine + IMP. It carries out the reaction dIMP + inosine = 2'-deoxyinosine + IMP. The catalysed reaction is inosine + UMP = uridine + IMP. It catalyses the reaction inosine + CMP = cytidine + IMP. The enzyme catalyses inosine + AMP = IMP + adenosine. With respect to regulation, allosterically activated by various compounds including ATP, 2,3-BPG/2,3-Bisphosphoglyceric acid and Ap4A/P1,P4-bis(5'-adenosyl) tetraphosphate. Binding of an allosteric activator is a prerequisiste to magnesium and substrate binding. Inhibited by inorganic phosphate. Its function is as follows. Broad specificity cytosolic 5'-nucleotidase that catalyzes the dephosphorylation of 6-hydroxypurine nucleoside 5'-monophosphates. In addition, possesses a phosphotransferase activity by which it can transfer a phosphate from a donor nucleoside monophosphate to an acceptor nucleoside, preferably inosine, deoxyinosine and guanosine. Has the highest activities for IMP and GMP followed by dIMP, dGMP and XMP. Could also catalyze the transfer of phosphates from pyrimidine monophosphates but with lower efficiency. Through these activities regulates the purine nucleoside/nucleotide pools within the cell. In Rattus norvegicus (Rat), this protein is Cytosolic purine 5'-nucleotidase.